The chain runs to 216 residues: Probable GTP-binding protein EngB (216 aa).

Residues 43–216 enclose the EngB-type G domain; that stretch reads DRIEVCFAGR…TLRSIIAHLD (174 aa). GTP contacts are provided by residues 51 to 58, 78 to 82, 96 to 99, 163 to 166, and 197 to 199; these read GRSNVGKS, GRTQE, DLPG, TKAD, and TSS. Mg(2+)-binding residues include Ser58 and Thr80.

Belongs to the TRAFAC class TrmE-Era-EngA-EngB-Septin-like GTPase superfamily. EngB GTPase family. The cofactor is Mg(2+).

In terms of biological role, necessary for normal cell division and for the maintenance of normal septation. This is Probable GTP-binding protein EngB from Ruegeria sp. (strain TM1040) (Silicibacter sp.).